Here is a 470-residue protein sequence, read N- to C-terminus: MNTGHITQVMGPVVDVKFKSGQLPEINNALKVVQVGADKNAVDVTVTLEVALHLGDDSVRTVAMGSTDGLVRGTEALDTGAPISVPVGEATLGRVFNVLGEAIDLGEPVAADVKRDPIHREAPKFEELSTTTEILETGIKVVDLLAPYIKGGKIGLFGGAGVGKTVLIQELINNIAQEHGGISVFAGVGERTREGNDLYHEMTDSGVIKKTAMVFGQMNEPPGARMRVALSGLTMAEHFRDRDGQDVLLFVDNIFRFTQAGSEVSALLGRMPSAVGYQPTLATEMGQLQERITSTKVGSVTSIQAIYVPADDYTDPAPATTFAHLDATTNLERKLSEMGIYPAVDPLASTSRALSPEIVGEEHYSVARQVQQTLQKYKELQDIIAILGMDELSEEDKLVVHRARRIQFFLSQNFHVAEQFTGQKGSYVPVKETIKGFKEILDGKYDDLPEDAFRLVGRIEEVIEKGKQMA.

Residue 158-165 (GGAGVGKT) participates in ATP binding.

It belongs to the ATPase alpha/beta chains family. F-type ATPases have 2 components, CF(1) - the catalytic core - and CF(0) - the membrane proton channel. CF(1) has five subunits: alpha(3), beta(3), gamma(1), delta(1), epsilon(1). CF(0) has three main subunits: a(1), b(2) and c(9-12). The alpha and beta chains form an alternating ring which encloses part of the gamma chain. CF(1) is attached to CF(0) by a central stalk formed by the gamma and epsilon chains, while a peripheral stalk is formed by the delta and b chains.

The protein resides in the cell membrane. It carries out the reaction ATP + H2O + 4 H(+)(in) = ADP + phosphate + 5 H(+)(out). Functionally, produces ATP from ADP in the presence of a proton gradient across the membrane. The catalytic sites are hosted primarily by the beta subunits. This is ATP synthase subunit beta from Alkalihalophilus pseudofirmus (strain ATCC BAA-2126 / JCM 17055 / OF4) (Bacillus pseudofirmus).